Consider the following 868-residue polypeptide: Coatomer subunit gamma (868 aa).

Residues 1-11 show a composition bias toward basic residues; it reads MWRTKRGRTRR. A disordered region spans residues 1 to 22; it reads MWRTKRGRTRRRDAGGNPWQNL. HEAT repeat units follow at residues 64 to 101, 287 to 324, 326 to 359, and 360 to 396; these read REAT…IADD, RELS…LHPP, VNVC…GAES, and SVER…KFPR.

This sequence belongs to the COPG family. Oligomeric complex that consists of at least the alpha, beta, beta', gamma, delta, epsilon and zeta subunits.

Its subcellular location is the cytoplasm. It is found in the golgi apparatus membrane. The protein localises to the cytoplasmic vesicle. The protein resides in the COPI-coated vesicle membrane. It localises to the endoplasmic reticulum. In terms of biological role, the coatomer is a cytosolic protein complex that binds to dilysine motifs and reversibly associates with Golgi non-clathrin-coated vesicles, which further mediate biosynthetic protein transport from the ER, via the Golgi up to the trans Golgi network. Coatomer complex is required for budding from Golgi membranes, and is essential for the retrograde Golgi-to-ER transport of dilysine-tagged proteins. This chain is Coatomer subunit gamma, found in Anopheles gambiae (African malaria mosquito).